Reading from the N-terminus, the 449-residue chain is Xylose isomerase (449 aa).

Residues H103 and D106 contribute to the active site. Mg(2+)-binding residues include E234, E270, H273, D298, D309, D311, and D342.

This sequence belongs to the xylose isomerase family. In terms of assembly, homotetramer. Requires Mg(2+) as cofactor.

It is found in the cytoplasm. It catalyses the reaction alpha-D-xylose = alpha-D-xylulofuranose. The sequence is that of Xylose isomerase from Levilactobacillus brevis (strain ATCC 367 / BCRC 12310 / CIP 105137 / JCM 1170 / LMG 11437 / NCIMB 947 / NCTC 947) (Lactobacillus brevis).